The sequence spans 291 residues: Cilia- and flagella-associated protein 298 (291 aa).

Belongs to the CFAP298 family.

The polypeptide is Cilia- and flagella-associated protein 298 (Drosophila melanogaster (Fruit fly)).